Consider the following 147-residue polypeptide: uncharacterized protein (147 aa).

Residues 3 to 23 (APMIGMVVLVVVLGLAVLALS) traverse the membrane as a helical segment.

This sequence to M.leprae ML1147.

Its subcellular location is the membrane. This is an uncharacterized protein from Mycobacterium tuberculosis (strain CDC 1551 / Oshkosh).